Here is a 33-residue protein sequence, read N- to C-terminus: Cytochrome b6-f complex subunit 8 (33 aa).

The chain crosses the membrane as a helical span at residues Leu2–Val22.

The protein belongs to the PetN family. The 4 large subunits of the cytochrome b6-f complex are cytochrome b6, subunit IV (17 kDa polypeptide, PetD), cytochrome f and the Rieske protein, while the 4 small subunits are PetG, PetL, PetM and PetN. The complex functions as a dimer.

The protein resides in the cellular thylakoid membrane. Functionally, component of the cytochrome b6-f complex, which mediates electron transfer between photosystem II (PSII) and photosystem I (PSI), cyclic electron flow around PSI, and state transitions. The protein is Cytochrome b6-f complex subunit 8 of Synechococcus sp. (strain CC9605).